A 30-amino-acid chain; its full sequence is Putative cytochrome bd-II ubiquinol oxidase subunit AppX (30 aa).

The chain crosses the membrane as a helical span at residues 4-24 (LLWFVGILLMCSLSTLVLVWL).

The protein belongs to the cytochrome ubiquinol oxidase subunit X family. In terms of assembly, able to interact with CydA and CydB upon overexpression.

It localises to the cell inner membrane. In terms of biological role, might be part of cytochrome bd-II oxidase (appB and appC). Able to restore reductant resistance to a cydX deletion mutant upon overexpression. CydX and this protein may have some functional overlap. The polypeptide is Putative cytochrome bd-II ubiquinol oxidase subunit AppX (appX) (Escherichia coli (strain K12)).